The sequence spans 130 residues: Small ribosomal subunit protein uS9 (130 aa).

Belongs to the universal ribosomal protein uS9 family.

In Clostridium perfringens (strain ATCC 13124 / DSM 756 / JCM 1290 / NCIMB 6125 / NCTC 8237 / Type A), this protein is Small ribosomal subunit protein uS9.